The sequence spans 345 residues: Mitochondrial metalloendopeptidase OMA1 (345 aa).

Residues 1–67 (MLRNIIRFKG…ILLDKSSRKY (67 aa)) lie on the Mitochondrial matrix side of the membrane. Residues 68–88 (LALLFGGCSLFYYTHLDKAPV) traverse the membrane as a helical segment. At 89–345 (SDRSRFIWVS…GNYYKSFFSM (257 aa)) the chain is on the mitochondrial intermembrane side. Residue His203 participates in Zn(2+) binding. The active site involves Glu204. Residues His207 and Glu257 each contribute to the Zn(2+) site. Cys272 and Cys332 are disulfide-bonded. The segment at 314–345 (ENMSKWLPKANEIYEQSDCSSMGNYYKSFFSM) is required for protease activation.

The protein belongs to the peptidase M48 family. In terms of assembly, homooligomer. Zn(2+) serves as cofactor. In terms of processing, forms a redox-dependent disulfide bond, which plays a structural role and regulates its conformational stability and activity.

It localises to the mitochondrion inner membrane. Protease activity is induced in response to various mitochondrial stress, such as changes in membrane potential, oxidative stress or chronic hyperpolarization, and depends on its C-terminal region. Its function is as follows. Protease that is part of the quality control system in the inner membrane of mitochondria. Activated in response to various mitochondrial stress, leading to the proteolytic cleavage of target proteins, such as OXA1 and COX1. Cleaves and thereby promotes the turnover of mistranslated or misfolded membrane proteins. Cleaves the misfolded multi-pass membrane protein OXA1. Involved in quality control of cytochrome oxidase assembly: mediates the cleavage of COX1 in cells lacking COA2. Required for the stability of the respiratory supercomplexes. Required for TOR signaling. The sequence is that of Mitochondrial metalloendopeptidase OMA1 from Saccharomyces cerevisiae (strain ATCC 204508 / S288c) (Baker's yeast).